Reading from the N-terminus, the 160-residue chain is General odorant-binding protein 2 (160 aa).

A signal peptide spans 1–19; it reads MGYKLLLMYIAIVIDSVIG. 3 disulfides stabilise this stretch: cysteine 38–cysteine 73, cysteine 69–cysteine 127, and cysteine 116–cysteine 136.

It belongs to the PBP/GOBP family. In terms of tissue distribution, antenna.

In terms of biological role, present in the aqueous fluid surrounding olfactory sensory dendrites and are thought to aid in the capture and transport of hydrophobic odorants into and through this fluid. The sequence is that of General odorant-binding protein 2 from Antheraea pernyi (Chinese oak silk moth).